A 154-amino-acid polypeptide reads, in one-letter code: tRNA (cytidine(34)-2'-O)-methyltransferase (154 aa).

Residues L78, G100, I122, and S130 each contribute to the S-adenosyl-L-methionine site.

This sequence belongs to the class IV-like SAM-binding methyltransferase superfamily. RNA methyltransferase TrmH family. TrmL subfamily. Homodimer.

Its subcellular location is the cytoplasm. The catalysed reaction is cytidine(34) in tRNA + S-adenosyl-L-methionine = 2'-O-methylcytidine(34) in tRNA + S-adenosyl-L-homocysteine + H(+). The enzyme catalyses 5-carboxymethylaminomethyluridine(34) in tRNA(Leu) + S-adenosyl-L-methionine = 5-carboxymethylaminomethyl-2'-O-methyluridine(34) in tRNA(Leu) + S-adenosyl-L-homocysteine + H(+). In terms of biological role, methylates the ribose at the nucleotide 34 wobble position in the two leucyl isoacceptors tRNA(Leu)(CmAA) and tRNA(Leu)(cmnm5UmAA). Catalyzes the methyl transfer from S-adenosyl-L-methionine to the 2'-OH of the wobble nucleotide. In Saccharophagus degradans (strain 2-40 / ATCC 43961 / DSM 17024), this protein is tRNA (cytidine(34)-2'-O)-methyltransferase.